Consider the following 196-residue polypeptide: MARGARYRVPLKRRREGKTNYYKRRKLIISGKPRLVVRVLSRTAIVQIAKATPKGDVVIASAHSNELKKYGWKGYRRNTPALYLLGFLAAKKALKQGVTEAIVDIGLHRPVKASRVFAAVKGALDAGLKIPVGDGVLPEDDRVRGEHIANYAKMLKESNPELFKLRFSGYLSAGLDPESLPEHFDSVKQKIEEALQ.

The protein belongs to the universal ribosomal protein uL18 family. As to quaternary structure, part of the 50S ribosomal subunit. Contacts the 5S and 23S rRNAs.

In terms of biological role, this is one of the proteins that bind and probably mediate the attachment of the 5S RNA into the large ribosomal subunit, where it forms part of the central protuberance. The sequence is that of Large ribosomal subunit protein uL18 from Thermofilum pendens (strain DSM 2475 / Hrk 5).